We begin with the raw amino-acid sequence, 207 residues long: Cilia- and flagella-associated protein 418 (207 aa).

The segment at 1–75 (MAEDLDELLD…LINEIFEEPH (75 aa)) is required for interaction with FAM161A.

In terms of assembly, interacts (via N-terminus) with FAM161A (via central region); the interaction is direct. Expressed in the retina (at protein level).

The protein localises to the cytoplasm. It is found in the photoreceptor inner segment. Functionally, may be involved in photoreceptor outer segment disk morphogenesis. The sequence is that of Cilia- and flagella-associated protein 418 (CFAP418) from Bos taurus (Bovine).